A 291-amino-acid chain; its full sequence is Pirin-like protein (291 aa).

It belongs to the pirin family.

It localises to the nucleus. The sequence is that of Pirin-like protein from Solanum lycopersicum (Tomato).